The following is a 216-amino-acid chain: Protein Syd (216 aa).

This sequence belongs to the Syd family.

Its subcellular location is the cell inner membrane. In terms of biological role, interacts with the SecY protein in vivo. May bind preferentially to an uncomplexed state of SecY, thus functioning either as a chelating agent for excess SecY in the cell or as a regulatory factor that negatively controls the translocase function. This chain is Protein Syd, found in Shewanella frigidimarina (strain NCIMB 400).